A 171-amino-acid chain; its full sequence is Large ribosomal subunit protein bL9 (171 aa).

The protein belongs to the bacterial ribosomal protein bL9 family.

Functionally, binds to the 23S rRNA. This is Large ribosomal subunit protein bL9 from Rickettsia prowazekii (strain Madrid E).